A 528-amino-acid polypeptide reads, in one-letter code: Lysine--tRNA ligase (528 aa).

The 'HIGH' region signature appears at 36–44; it reads PSGTVHIGN. A 'KMSKS' region motif is present at residues 287-291; that stretch reads KMSSS.

The protein belongs to the class-I aminoacyl-tRNA synthetase family.

It localises to the cytoplasm. The enzyme catalyses tRNA(Lys) + L-lysine + ATP = L-lysyl-tRNA(Lys) + AMP + diphosphate. The protein is Lysine--tRNA ligase (lysS) of Treponema pallidum (strain Nichols).